Here is a 102-residue protein sequence, read N- to C-terminus: Aspartyl/glutamyl-tRNA(Asn/Gln) amidotransferase subunit C (102 aa).

It belongs to the GatC family. As to quaternary structure, heterotrimer of A, B and C subunits.

The catalysed reaction is L-glutamyl-tRNA(Gln) + L-glutamine + ATP + H2O = L-glutaminyl-tRNA(Gln) + L-glutamate + ADP + phosphate + H(+). The enzyme catalyses L-aspartyl-tRNA(Asn) + L-glutamine + ATP + H2O = L-asparaginyl-tRNA(Asn) + L-glutamate + ADP + phosphate + 2 H(+). In terms of biological role, allows the formation of correctly charged Asn-tRNA(Asn) or Gln-tRNA(Gln) through the transamidation of misacylated Asp-tRNA(Asn) or Glu-tRNA(Gln) in organisms which lack either or both of asparaginyl-tRNA or glutaminyl-tRNA synthetases. The reaction takes place in the presence of glutamine and ATP through an activated phospho-Asp-tRNA(Asn) or phospho-Glu-tRNA(Gln). The protein is Aspartyl/glutamyl-tRNA(Asn/Gln) amidotransferase subunit C of Bordetella avium (strain 197N).